Reading from the N-terminus, the 340-residue chain is DNA-directed RNA polymerase subunit alpha (340 aa).

Positions 1–236 (MSVIQKNWQE…DQLQLFINFE (236 aa)) are alpha N-terminal domain (alpha-NTD). The segment at 252–340 (FNKNLLRKVD…DLAKKLEEPY (89 aa)) is alpha C-terminal domain (alpha-CTD).

It belongs to the RNA polymerase alpha chain family. Homodimer. The RNAP catalytic core consists of 2 alpha, 1 beta, 1 beta' and 1 omega subunit. When a sigma factor is associated with the core the holoenzyme is formed, which can initiate transcription.

It carries out the reaction RNA(n) + a ribonucleoside 5'-triphosphate = RNA(n+1) + diphosphate. DNA-dependent RNA polymerase catalyzes the transcription of DNA into RNA using the four ribonucleoside triphosphates as substrates. The chain is DNA-directed RNA polymerase subunit alpha from Rhodospirillum rubrum (strain ATCC 11170 / ATH 1.1.1 / DSM 467 / LMG 4362 / NCIMB 8255 / S1).